The following is a 703-amino-acid chain: Antigen peptide transporter 2 (703 aa).

The Lumenal portion of the chain corresponds to 1–6 (MALSHP). A helical membrane pass occupies residues 7 to 27 (RPWASLLLVDLALLGLLQSSL). The Cytoplasmic segment spans residues 28 to 56 (GTLLPPGLPGLWLEGTLRLGVLWGLLKVG). A helical membrane pass occupies residues 57–77 (GLLRLVGTFLPLLCLTNPLFF). Residues 78 to 98 (SLRALVGSTMSTSVVRVASAS) are Lumenal-facing. A helical transmembrane segment spans residues 99–119 (WGWLLADYGAVALSLAVWAVL). The Cytoplasmic portion of the chain corresponds to 120 to 148 (SPAGAQEKEPGQENNRALMIRLLRLSKPD). A helical transmembrane segment spans residues 149-169 (LPFLIVAFIFLAMAVWWEMFI). Positions 152 to 435 (LIVAFIFLAM…LVYMYGDMLS (284 aa)) constitute an ABC transmembrane type-1 domain. Residues 170-187 (PHYSGRVIDILGGDFDPD) are Lumenal-facing. A helical transmembrane segment spans residues 188 to 208 (AFASAIFFMCLFSVGSSLSAG). The Cytoplasmic segment spans residues 209 to 266 (CRGGSFLFAESRINLRIREQLFSSLLRQDLAFFQETKTGELNSRLSSDTSLMSQWLSL). Residues 267–287 (NANILLRSLVKVVGLYYFMLQ) traverse the membrane as a helical segment. The Lumenal portion of the chain corresponds to 288–293 (VSPRLT). The chain crosses the membrane as a helical span at residues 294–314 (FLSLLDLPLTIAAEKVYNPRH). Positions 301-389 (PLTIAAEKVY…QRVMALGMQV (89 aa)) are part of the peptide-binding site. Residues 315–374 (QAVLKEIQDAVAKAGQVVREAVGGLQTVRSFGAEEQEVRRYKEALERCRQLWWRRDLEKS) lie on the Cytoplasmic side of the membrane. Residues 375–395 (LYLVIQRVMALGMQVLILNVG) form a helical membrane-spanning segment. Residues 396 to 408 (VQQILAGEVTRGG) are Lumenal-facing. A helical membrane pass occupies residues 409–429 (LLSFLLYQEEVGHHVQNLVYM). Residues 414–433 (LYQEEVGHHVQNLVYMYGDM) form a part of the peptide-binding site region. Over 430-703 (YGDMLSNVGA…AHLVQQRLEA (274 aa)) the chain is Cytoplasmic. In terms of domain architecture, ABC transporter spans 468–702 (VEFQDVSFSY…YAHLVQQRLE (235 aa)). An ATP-binding site is contributed by 503–510 (GPNGSGKS).

It belongs to the ABC transporter superfamily. ABCB family. MHC peptide exporter (TC 3.A.1.209) subfamily. In terms of assembly, heterodimer of TAP1 and TAP2 (TAP1-TAP2). A component of the peptide loading complex (PLC), interacts via TAPBP with MHCI heterodimer; this interaction mediates peptide-MHCI assembly. The cofactor is Mg(2+).

The protein resides in the endoplasmic reticulum membrane. It catalyses the reaction a peptide antigen(in) + ATP + H2O = a peptide antigen(out) + ADP + phosphate + H(+). Functionally, ABC transporter associated with antigen processing. In complex with TAP1 mediates unidirectional translocation of peptide antigens from cytosol to endoplasmic reticulum (ER) for loading onto MHC class I (MHCI) molecules. Uses the chemical energy of ATP to export peptides against the concentration gradient. During the transport cycle alternates between 'inward-facing' state with peptide binding site facing the cytosol to 'outward-facing' state with peptide binding site facing the ER lumen. Peptide antigen binding to ATP-loaded TAP1-TAP2 induces a switch to hydrolysis-competent 'outward-facing' conformation ready for peptide loading onto nascent MHCI molecules. Subsequently ATP hydrolysis resets the transporter to the 'inward facing' state for a new cycle. As a component of the peptide loading complex (PLC), acts as a molecular scaffold essential for peptide-MHCI assembly and antigen presentation. The chain is Antigen peptide transporter 2 (Tap2) from Rattus norvegicus (Rat).